Here is a 279-residue protein sequence, read N- to C-terminus: Ribosomal RNA small subunit methyltransferase J (279 aa).

S-adenosyl-L-methionine contacts are provided by residues 138 to 139 and D194; that span reads ER.

Belongs to the methyltransferase superfamily. RsmJ family.

The protein localises to the cytoplasm. The enzyme catalyses guanosine(1516) in 16S rRNA + S-adenosyl-L-methionine = N(2)-methylguanosine(1516) in 16S rRNA + S-adenosyl-L-homocysteine + H(+). Functionally, specifically methylates the guanosine in position 1516 of 16S rRNA. The protein is Ribosomal RNA small subunit methyltransferase J of Acinetobacter baumannii (strain ATCC 17978 / DSM 105126 / CIP 53.77 / LMG 1025 / NCDC KC755 / 5377).